The chain runs to 159 residues: SsrA-binding protein (159 aa).

It belongs to the SmpB family.

The protein resides in the cytoplasm. Functionally, required for rescue of stalled ribosomes mediated by trans-translation. Binds to transfer-messenger RNA (tmRNA), required for stable association of tmRNA with ribosomes. tmRNA and SmpB together mimic tRNA shape, replacing the anticodon stem-loop with SmpB. tmRNA is encoded by the ssrA gene; the 2 termini fold to resemble tRNA(Ala) and it encodes a 'tag peptide', a short internal open reading frame. During trans-translation Ala-aminoacylated tmRNA acts like a tRNA, entering the A-site of stalled ribosomes, displacing the stalled mRNA. The ribosome then switches to translate the ORF on the tmRNA; the nascent peptide is terminated with the 'tag peptide' encoded by the tmRNA and targeted for degradation. The ribosome is freed to recommence translation, which seems to be the essential function of trans-translation. This Saccharophagus degradans (strain 2-40 / ATCC 43961 / DSM 17024) protein is SsrA-binding protein.